Consider the following 501-residue polypeptide: Fumarate reductase 2 (501 aa).

Residues 1–32 constitute a mitochondrion transit peptide; sequence MIRSVRRVFIYVSIFVLIIVLKRTLSGTDQTS. 37 to 51 contacts FAD; it reads VVVIGSGLAGLTTSN. Active-site residues include histidine 281 and arginine 304.

The protein belongs to the FAD-dependent oxidoreductase 2 family. FRD/SDH subfamily. FAD serves as cofactor.

The protein localises to the mitochondrion. It catalyses the reaction succinate + NAD(+) = fumarate + NADH + H(+). Irreversibly catalyzes the reduction of fumarate to succinate. Together with the second isozyme of soluble fumarate reductase (FRD1), essential for anaerobic growth. Involved in maintaining redox balance during oxygen deficiency conditions. Reduction of fumarate is the main source of succinate during fermentation, and under anaerobic conditions, the formation of succinate is strictly required for the reoxidation of FADH(2). This chain is Fumarate reductase 2 (OSM1), found in Saccharomyces cerevisiae (strain ATCC 204508 / S288c) (Baker's yeast).